The sequence spans 130 residues: Small ribosomal subunit protein uS9 (130 aa).

The tract at residues 105-130 (TRDSRMVERKKPGLKKARRASQFSKR) is disordered. Residues 106–115 (RDSRMVERKK) are compositionally biased toward basic and acidic residues. Residues 116–130 (PGLKKARRASQFSKR) are compositionally biased toward basic residues.

The protein belongs to the universal ribosomal protein uS9 family.

This is Small ribosomal subunit protein uS9 from Oenococcus oeni (strain ATCC BAA-331 / PSU-1).